The sequence spans 1164 residues: Phytochrome D (1164 aa).

The disordered stretch occupies residues 1-55; it reads MVSGGGSKTSGGEAASSGHRRSRHTSAAEQAQSSANKALRSQNQQPQNHGGGTES. The span at 25-55 shows a compositional bias: polar residues; sequence TSAAEQAQSSANKALRSQNQQPQNHGGGTES. The region spanning 255–437 is the GAF domain; the sequence is DIKLLCDTVV…AFGLQLNMEL (183 aa). Cysteine 360 is a binding site for phytochromobilin. PAS domains follow at residues 656–727 and 790–861; these read VARE…LKGD and DYKA…MIVL. The 220-residue stretch at 938 to 1157 folds into the Histidine kinase domain; that stretch reads YIFQVIKNPL…LIVIELPVPL (220 aa).

The protein belongs to the phytochrome family. As to quaternary structure, homodimer. Post-translationally, contains one covalently linked phytochromobilin chromophore.

In terms of biological role, regulatory photoreceptor which exists in two forms that are reversibly interconvertible by light: the Pr form that absorbs maximally in the red region of the spectrum and the Pfr form that absorbs maximally in the far-red region. Photoconversion of Pr to Pfr induces an array of morphogenic responses, whereas reconversion of Pfr to Pr cancels the induction of those responses. Pfr controls the expression of a number of nuclear genes including those encoding the small subunit of ribulose-bisphosphate carboxylase, chlorophyll A/B binding protein, protochlorophyllide reductase, rRNA, etc. It also controls the expression of its own gene(s) in a negative feedback fashion. This is Phytochrome D (PHYD) from Arabidopsis thaliana (Mouse-ear cress).